The sequence spans 873 residues: Bifunctional uridylyltransferase/uridylyl-removing enzyme (873 aa).

The uridylyltransferase stretch occupies residues 1–332 (MKYLSPLSLS…HQGEQDDAII (332 aa)). A uridylyl-removing region spans residues 333-692 (IDDDFQRRGR…ISKNASRGGT (360 aa)). Residues 451-573 (VDEHSIRLLK…VRDEERLDYL (123 aa)) form the HD domain. ACT domains follow at residues 693-777 (EIFV…RPPR) and 800-873 (LMEF…RLSS).

Belongs to the GlnD family. Mg(2+) is required as a cofactor.

The enzyme catalyses [protein-PII]-L-tyrosine + UTP = [protein-PII]-uridylyl-L-tyrosine + diphosphate. It carries out the reaction [protein-PII]-uridylyl-L-tyrosine + H2O = [protein-PII]-L-tyrosine + UMP + H(+). Uridylyltransferase (UTase) activity is inhibited by glutamine, while glutamine activates uridylyl-removing (UR) activity. Functionally, modifies, by uridylylation and deuridylylation, the PII regulatory proteins (GlnB and homologs), in response to the nitrogen status of the cell that GlnD senses through the glutamine level. Under low glutamine levels, catalyzes the conversion of the PII proteins and UTP to PII-UMP and PPi, while under higher glutamine levels, GlnD hydrolyzes PII-UMP to PII and UMP (deuridylylation). Thus, controls uridylylation state and activity of the PII proteins, and plays an important role in the regulation of nitrogen assimilation and metabolism. The sequence is that of Bifunctional uridylyltransferase/uridylyl-removing enzyme from Aliivibrio fischeri (strain ATCC 700601 / ES114) (Vibrio fischeri).